A 613-amino-acid chain; its full sequence is tRNA 5-methylaminomethyl-2-thiouridine biosynthesis bifunctional protein MnmC (613 aa).

The interval 1-225 (MKKAKLIFKD…KREMIKAYLE (225 aa)) is tRNA (mnm(5)s(2)U34)-methyltransferase. The FAD-dependent cmnm(5)s(2)U34 oxidoreductase stretch occupies residues 252 to 613 (IGAGISSAVL…FLIRKLKKGL (362 aa)).

In the N-terminal section; belongs to the methyltransferase superfamily. tRNA (mnm(5)s(2)U34)-methyltransferase family. It in the C-terminal section; belongs to the DAO family. It depends on FAD as a cofactor.

Its subcellular location is the cytoplasm. It carries out the reaction 5-aminomethyl-2-thiouridine(34) in tRNA + S-adenosyl-L-methionine = 5-methylaminomethyl-2-thiouridine(34) in tRNA + S-adenosyl-L-homocysteine + H(+). Catalyzes the last two steps in the biosynthesis of 5-methylaminomethyl-2-thiouridine (mnm(5)s(2)U) at the wobble position (U34) in tRNA. Catalyzes the FAD-dependent demodification of cmnm(5)s(2)U34 to nm(5)s(2)U34, followed by the transfer of a methyl group from S-adenosyl-L-methionine to nm(5)s(2)U34, to form mnm(5)s(2)U34. The polypeptide is tRNA 5-methylaminomethyl-2-thiouridine biosynthesis bifunctional protein MnmC (Campylobacter jejuni (strain RM1221)).